Here is a 444-residue protein sequence, read N- to C-terminus: Cell division cycle 20.4, cofactor of APC complex (444 aa).

A compositionally biased stretch (polar residues) spans 88 to 99 (LLSTNHSDSPHQ). The segment at 88–108 (LLSTNHSDSPHQNPKPVKPRR) is disordered. WD repeat units follow at residues 124–161 (RDDF…TSEL), 166–205 (EDKG…QVRT), 209–246 (GHES…SIVE), 250–289 (GHTE…SKQT), 298–340 (EHTA…CLNS), 342–383 (ETGS…KMAE), and 386–425 (GHTS…PKTT).

The protein belongs to the WD repeat CDC20/Fizzy family. The APC/C is composed of at least 11 subunits that stay tightly associated throughout the cell cycle.

Its subcellular location is the cytoplasm. It functions in the pathway protein modification; protein ubiquitination. Functionally, component of the anaphase promoting complex/cyclosome (APC/C), a cell cycle-regulated E3 ubiquitin-protein ligase complex that controls progression through mitosis and the G1 phase of the cell cycle. The protein is Cell division cycle 20.4, cofactor of APC complex (CDC20-4) of Arabidopsis thaliana (Mouse-ear cress).